The chain runs to 342 residues: Trans-3-hydroxy-L-proline dehydratase (342 aa).

Catalysis depends on serine 90, which acts as the Proton acceptor. Substrate-binding positions include 91-92 (GS), aspartate 251, and 256-257 (GT).

Belongs to the proline racemase family.

It carries out the reaction trans-3-hydroxy-L-proline = 1-pyrroline-2-carboxylate + H2O. Functionally, catalyzes the dehydration of trans-3-hydroxy-L-proline (t3LHyp) to Delta(1)-pyrroline-2-carboxylate (Pyr2C). Displays neither proline racemase activity nor 4-hydroxyproline 2-epimerase activity. The sequence is that of Trans-3-hydroxy-L-proline dehydratase from Brucella suis biovar 1 (strain 1330).